We begin with the raw amino-acid sequence, 266 residues long: Small ribosomal subunit protein uS2 (266 aa).

The segment at 247 to 266 is disordered; it reads EGENNYSNNRSWNKPERTNN. Residues 249–258 show a composition bias toward polar residues; that stretch reads ENNYSNNRSW.

It belongs to the universal ribosomal protein uS2 family.

This chain is Small ribosomal subunit protein uS2, found in Mesoplasma florum (strain ATCC 33453 / NBRC 100688 / NCTC 11704 / L1) (Acholeplasma florum).